The sequence spans 271 residues: Putative phosphoenolpyruvate synthase regulatory protein (271 aa).

152 to 159 (GVSRCGKT) contributes to the ADP binding site.

It belongs to the pyruvate, phosphate/water dikinase regulatory protein family. PSRP subfamily.

It catalyses the reaction [pyruvate, water dikinase] + ADP = [pyruvate, water dikinase]-phosphate + AMP + H(+). The enzyme catalyses [pyruvate, water dikinase]-phosphate + phosphate + H(+) = [pyruvate, water dikinase] + diphosphate. In terms of biological role, bifunctional serine/threonine kinase and phosphorylase involved in the regulation of the phosphoenolpyruvate synthase (PEPS) by catalyzing its phosphorylation/dephosphorylation. In Legionella pneumophila (strain Lens), this protein is Putative phosphoenolpyruvate synthase regulatory protein.